The following is a 430-amino-acid chain: Elongation factor 1-gamma (430 aa).

A GST N-terminal domain is found at 2 to 84 (VAGKLYTYPE…YVANETLRGS (83 aa)). The region spanning 85–213 (SDLEKAQIIQ…FKLCEKAGEF (129 aa)) is the GST C-terminal domain. Basic and acidic residues-rich tracts occupy residues 232 to 255 (KTEK…KEQE) and 269 to 278 (PKSKDPFDEM). Positions 232–278 (KTEKAPKAVKAKPEKKEVPKKEQEEPADAAEEALAAEPKSKDPFDEM) are disordered. The region spanning 271–430 (SKDPFDEMPK…RKFNQGKIFK (160 aa)) is the EF-1-gamma C-terminal domain.

EF-1 is composed of four subunits: alpha, beta, delta, and gamma.

Functionally, probably plays a role in anchoring the complex to other cellular components. This chain is Elongation factor 1-gamma, found in Artemia salina (Brine shrimp).